Consider the following 314-residue polypeptide: Ribosomal RNA small subunit methyltransferase H (314 aa).

S-adenosyl-L-methionine-binding positions include 34–36 (GGH), Asp-54, Phe-83, Asp-104, and Gln-111.

This sequence belongs to the methyltransferase superfamily. RsmH family.

It localises to the cytoplasm. The enzyme catalyses cytidine(1402) in 16S rRNA + S-adenosyl-L-methionine = N(4)-methylcytidine(1402) in 16S rRNA + S-adenosyl-L-homocysteine + H(+). In terms of biological role, specifically methylates the N4 position of cytidine in position 1402 (C1402) of 16S rRNA. The chain is Ribosomal RNA small subunit methyltransferase H from Ligilactobacillus salivarius (strain UCC118) (Lactobacillus salivarius).